The following is a 418-amino-acid chain: IQ domain-containing protein C (418 aa).

The IQ domain occupies 6-35 (FLRKVSTLQAGFRGFLVRRQFQSLRAEYEA). Disordered regions lie at residues 101 to 142 (QKKT…SVSK), 230 to 264 (HHAE…KGRE), 280 to 299 (SQAG…QPFK), 327 to 355 (AETQ…AGPC), and 376 to 418 (GSLD…LQWR). 2 stretches are compositionally biased toward polar residues: residues 129–142 (KASQ…SVSK) and 249–259 (SVTSAGKTTAG). Residues 141 to 176 (SKMENADLGLSQSQQELQEQRNHLAMELLWLQQAIN) adopt a coiled-coil conformation. Residues 390-404 (PPSAGSSGHGNTSEL) are compositionally biased toward polar residues.

In Mus musculus (Mouse), this protein is IQ domain-containing protein C (Iqcc).